Here is a 150-residue protein sequence, read N- to C-terminus: Large ribosomal subunit protein uL13 (150 aa).

It belongs to the universal ribosomal protein uL13 family. As to quaternary structure, part of the 50S ribosomal subunit.

Functionally, this protein is one of the early assembly proteins of the 50S ribosomal subunit, although it is not seen to bind rRNA by itself. It is important during the early stages of 50S assembly. The chain is Large ribosomal subunit protein uL13 from Chlamydia trachomatis serovar A (strain ATCC VR-571B / DSM 19440 / HAR-13).